The sequence spans 235 residues: UDP-2,3-diacylglucosamine hydrolase (235 aa).

D9, H11, D42, N80, and H115 together coordinate Mn(2+). Residue 80 to 81 participates in substrate binding; that stretch reads NR. The substrate site is built by D123, S161, K165, K168, and H196. The Mn(2+) site is built by H196 and H198.

This sequence belongs to the LpxH family. It depends on Mn(2+) as a cofactor.

Its subcellular location is the cell inner membrane. The catalysed reaction is UDP-2-N,3-O-bis[(3R)-3-hydroxytetradecanoyl]-alpha-D-glucosamine + H2O = 2-N,3-O-bis[(3R)-3-hydroxytetradecanoyl]-alpha-D-glucosaminyl 1-phosphate + UMP + 2 H(+). It functions in the pathway glycolipid biosynthesis; lipid IV(A) biosynthesis; lipid IV(A) from (3R)-3-hydroxytetradecanoyl-[acyl-carrier-protein] and UDP-N-acetyl-alpha-D-glucosamine: step 4/6. In terms of biological role, hydrolyzes the pyrophosphate bond of UDP-2,3-diacylglucosamine to yield 2,3-diacylglucosamine 1-phosphate (lipid X) and UMP by catalyzing the attack of water at the alpha-P atom. Involved in the biosynthesis of lipid A, a phosphorylated glycolipid that anchors the lipopolysaccharide to the outer membrane of the cell. This is UDP-2,3-diacylglucosamine hydrolase from Actinobacillus succinogenes (strain ATCC 55618 / DSM 22257 / CCUG 43843 / 130Z).